Reading from the N-terminus, the 494-residue chain is MHPPGFKNFLLLVSSLFFIGLSAAPQSFSPSLRSLSGAPCRLSRAESERRCRAPGQPPGSALCHDRGRCECGVCICHVTEPGTYFGPLCECHDWVCETYDGKTCAGHGTCDCGKCKCDVGWSGEACQYPTKCDLTKKISNQMCKNSQDVICSNAGTCHCGRCKCDNSDGHGLIYGKFCECDDRECIDDETEEICGGHGKCYCGNCYCEAGWHGDKCEFQCDITPWESKRRCTSPDGKVCSNRGTCVCGECSCHDVDPTGDWGDIHGDTCECDERDCRAVYDRYSDDFCSGHGQCNCGRCDCRAGWYGKKCEHPKNCPLSAEESTRKCQGSSDLPCSGRGRCECGRCTCYPPGDSRVYGKTCECDDRRCEDLDGVVCGGRGTCSCGRCVCEKGWFGKLCQHPRKCNMTEEQSRSLCESADGTLCSGKGSCHCGKCICSGEEWYISGEFCDCDDRDCDKHDGLICTGNGICSCGNCECWDGWNGNACEIWLGTEYP.

Positions 1–23 are cleaved as a signal peptide; that stretch reads MHPPGFKNFLLLVSSLFFIGLSA. Cystine bridges form between Cys40/Cys71, Cys51/Cys69, Cys63/Cys74, Cys76/Cys89, Cys91/Cys112, Cys96/Cys110, Cys104/Cys115, Cys117/Cys126, Cys132/Cys159, Cys143/Cys157, Cys151/Cys162, Cys164/Cys178, Cys180/Cys202, Cys185/Cys200, Cys194/Cys205, Cys207/Cys216, Cys220/Cys247, Cys231/Cys245, Cys239/Cys250, Cys252/Cys269, Cys271/Cys296, Cys276/Cys294, Cys288/Cys299, Cys301/Cys310, Cys316/Cys343, Cys327/Cys341, Cys335/Cys346, Cys348/Cys361, Cys363/Cys384, Cys368/Cys382, Cys376/Cys387, Cys389/Cys398, Cys404/Cys431, Cys415/Cys429, Cys423/Cys434, Cys436/Cys448, Cys450/Cys471, Cys455/Cys469, Cys463/Cys474, and Cys476/Cys485. 10 I-EGF domains span residues 40-90, 91-127, 132-179, 180-217, 220-270, 271-311, 316-362, 363-399, 404-449, and 450-486; these read CRLS…PLCE, CHDW…EACQ, CDLT…KFCE, CDDR…DKCE, CDIT…DTCE, CDER…KKCE, CPLS…KTCE, CDDR…KLCQ, CNMT…EFCD, and CDDR…NACE. The I repeat unit spans residues 51 to 95; that stretch reads CRAPGQPPGSALCHDRGRCECGVCICHVTEPGTYFGPLCECHDWV. The tract at residues 51-494 is cysteine-rich tandem repeats; the sequence is CRAPGQPPGS…CEIWLGTEYP (444 aa). An II repeat occupies 96 to 142; that stretch reads CETYDGKTCAGHGTCDCGKCKCDVGWSGEACQYPTKCDLTKKISNQM. An III repeat occupies 143–184; it reads CKNSQDVICSNAGTCHCGRCKCDNSDGHGLIYGKFCECDDRE. An IV repeat occupies 185 to 230; that stretch reads CIDDETEEICGGHGKCYCGNCYCEAGWHGDKCEFQCDITPWESKRR. The stretch at 231-275 is one V repeat; it reads CTSPDGKVCSNRGTCVCGECSCHDVDPTGDWGDIHGDTCECDERD. A VI repeat occupies 276–326; it reads CRAVYDRYSDDFCSGHGQCNCGRCDCRAGWYGKKCEHPKNCPLSAEESTRK. The VII repeat unit spans residues 327–367; sequence CQGSSDLPCSGRGRCECGRCTCYPPGDSRVYGKTCECDDRR. The stretch at 368-414 is one VIII repeat; that stretch reads CEDLDGVVCGGRGTCSCGRCVCEKGWFGKLCQHPRKCNMTEEQSRSL. Asn405 is a glycosylation site (N-linked (GlcNAc...) asparagine). The stretch at 415–454 is one IX repeat; sequence CESADGTLCSGKGSCHCGKCICSGEEWYISGEFCDCDDRD. The stretch at 455–494 is one X repeat; that stretch reads CDKHDGLICTGNGICSCGNCECWDGWNGNACEIWLGTEYP.

The protein localises to the secreted. This is Integrin beta-like protein 1 (Itgbl1) from Rattus norvegicus (Rat).